The sequence spans 185 residues: Meiotic recombination protein REC104 (185 aa).

The segment at 146-168 (ANETRPLSSSSTPQILQSDYSVV) is disordered.

Its function is as follows. Potential transcriptional regulator that is required to activate expression of a number of early meiotic genes including HOP1. The polypeptide is Meiotic recombination protein REC104 (REC104) (Saccharomyces pastorianus (Lager yeast)).